The chain runs to 283 residues: ATP phosphoribosyltransferase (283 aa).

Belongs to the ATP phosphoribosyltransferase family. Long subfamily. Requires Mg(2+) as cofactor.

The protein localises to the cytoplasm. The catalysed reaction is 1-(5-phospho-beta-D-ribosyl)-ATP + diphosphate = 5-phospho-alpha-D-ribose 1-diphosphate + ATP. Its pathway is amino-acid biosynthesis; L-histidine biosynthesis; L-histidine from 5-phospho-alpha-D-ribose 1-diphosphate: step 1/9. With respect to regulation, feedback inhibited by histidine. In terms of biological role, catalyzes the condensation of ATP and 5-phosphoribose 1-diphosphate to form N'-(5'-phosphoribosyl)-ATP (PR-ATP). Has a crucial role in the pathway because the rate of histidine biosynthesis seems to be controlled primarily by regulation of HisG enzymatic activity. In Bifidobacterium longum (strain NCC 2705), this protein is ATP phosphoribosyltransferase.